The following is a 237-amino-acid chain: 1-(5-phosphoribosyl)-5-[(5-phosphoribosylamino)methylideneamino] imidazole-4-carboxamide isomerase (237 aa).

The active-site Proton acceptor is the Asp8. Asp129 functions as the Proton donor in the catalytic mechanism.

The protein belongs to the HisA/HisF family.

Its subcellular location is the cytoplasm. The catalysed reaction is 1-(5-phospho-beta-D-ribosyl)-5-[(5-phospho-beta-D-ribosylamino)methylideneamino]imidazole-4-carboxamide = 5-[(5-phospho-1-deoxy-D-ribulos-1-ylimino)methylamino]-1-(5-phospho-beta-D-ribosyl)imidazole-4-carboxamide. The protein operates within amino-acid biosynthesis; L-histidine biosynthesis; L-histidine from 5-phospho-alpha-D-ribose 1-diphosphate: step 4/9. This chain is 1-(5-phosphoribosyl)-5-[(5-phosphoribosylamino)methylideneamino] imidazole-4-carboxamide isomerase, found in Roseiflexus sp. (strain RS-1).